Here is a 281-residue protein sequence, read N- to C-terminus: MHHDPNPFDEGADDNPFSNGGGGGARRGGGGGGGGGGGGGKSQFSFGFGGLGGGSKGGATVDIPLDNMSDSKGKGKELLQWEADLKRREADIRRREEALKSAGVPMEEKNWPPFFPIIHHDIANEIPANAQKLQYLAFASWLGIVLCLFWNFIAVIVCWIRGGDSKLFFLATIYGMLGMPLSYLMWYRPLYRAMRTDSAFSFGWFFLCYMLHIAFCVFAAIAPPVIFRGKSLTGILAAIDTFSDHAIVGIFYFVGFALFCLETLVSIWVLQKVYMYFRGHK.

A disordered region spans residues 1 to 49; sequence MHHDPNPFDEGADDNPFSNGGGGGARRGGGGGGGGGGGGGKSQFSFGFG. Residues 1-139 lie on the Cytoplasmic side of the membrane; it reads MHHDPNPFDE…AQKLQYLAFA (139 aa). The span at 19–49 shows a compositional bias: gly residues; it reads NGGGGGARRGGGGGGGGGGGGGKSQFSFGFG. Positions 76 to 102 form a coiled coil; sequence KELLQWEADLKRREADIRRREEALKSA. The next 4 helical transmembrane spans lie at 140-160, 167-187, 202-222, and 250-270; these read SWLG…VCWI, LFFL…LMWY, FGWF…AAIA, and IFYF…IWVL. Residues 271-281 lie on the Cytoplasmic side of the membrane; it reads QKVYMYFRGHK.

This sequence belongs to the SCAMP family.

The protein localises to the cell membrane. The protein resides in the cytoplasmic vesicle. It is found in the secretory vesicle membrane. In terms of biological role, probably involved in membrane trafficking. The protein is Secretory carrier-associated membrane protein 5 (SCAMP5) of Oryza sativa subsp. japonica (Rice).